Consider the following 313-residue polypeptide: tRNA dimethylallyltransferase (313 aa).

11-18 (GPTASGKT) contributes to the ATP binding site. 13-18 (TASGKT) contributes to the substrate binding site. Interaction with substrate tRNA stretches follow at residues 36 to 39 (DSRQ) and 160 to 164 (QRLIR).

It belongs to the IPP transferase family. As to quaternary structure, monomer. Mg(2+) serves as cofactor.

The catalysed reaction is adenosine(37) in tRNA + dimethylallyl diphosphate = N(6)-dimethylallyladenosine(37) in tRNA + diphosphate. Functionally, catalyzes the transfer of a dimethylallyl group onto the adenine at position 37 in tRNAs that read codons beginning with uridine, leading to the formation of N6-(dimethylallyl)adenosine (i(6)A). This chain is tRNA dimethylallyltransferase, found in Chlorobaculum parvum (strain DSM 263 / NCIMB 8327) (Chlorobium vibrioforme subsp. thiosulfatophilum).